A 506-amino-acid chain; its full sequence is Glutamyl-tRNA(Gln) amidotransferase subunit A, mitochondrial (506 aa).

Catalysis depends on charge relay system residues Lys62 and Ser141. Catalysis depends on Ser165, which acts as the Acyl-ester intermediate.

It belongs to the amidase family. GatA subfamily. As to quaternary structure, subunit of the heterotrimeric GatCAB amidotransferase (AdT) complex, composed of A, B and C subunits.

It localises to the mitochondrion. The catalysed reaction is L-glutamyl-tRNA(Gln) + L-glutamine + ATP + H2O = L-glutaminyl-tRNA(Gln) + L-glutamate + ADP + phosphate + H(+). Its function is as follows. Allows the formation of correctly charged Gln-tRNA(Gln) through the transamidation of misacylated Glu-tRNA(Gln) in the mitochondria. The reaction takes place in the presence of glutamine and ATP through an activated gamma-phospho-Glu-tRNA(Gln). The polypeptide is Glutamyl-tRNA(Gln) amidotransferase subunit A, mitochondrial (Emericella nidulans (strain FGSC A4 / ATCC 38163 / CBS 112.46 / NRRL 194 / M139) (Aspergillus nidulans)).